The primary structure comprises 412 residues: Putative oxidoreductase bli-4, mitochondrial (412 aa).

A mitochondrion-targeting transit peptide spans 1–55 (MSTKLCQRIARTATLSPTSLVPRSSRLIPIVSSAAVRPSSAIPTRRPFSTTESRY). Positions 108, 120, 186, 269, 273, 308, 310, and 312 each coordinate NADP(+). Tyr269 serves as the catalytic Proton donor. Lys273 functions as the Lowers pKa of active site Tyr in the catalytic mechanism.

Belongs to the short-chain dehydrogenases/reductases (SDR) family.

The protein resides in the mitochondrion. In terms of biological role, may play a role as an NAD-dependent dehydrogenase in the mitochondria. In Neurospora crassa (strain ATCC 24698 / 74-OR23-1A / CBS 708.71 / DSM 1257 / FGSC 987), this protein is Putative oxidoreductase bli-4, mitochondrial (bli-4).